The primary structure comprises 467 residues: Cobyrinate a,c-diamide synthase (467 aa).

The GATase cobBQ-type domain maps to R256–E449. C338 functions as the Nucleophile in the catalytic mechanism.

This sequence belongs to the CobB/CbiA family. The cofactor is Mg(2+).

It catalyses the reaction cob(II)yrinate + 2 L-glutamine + 2 ATP + 2 H2O = cob(II)yrinate a,c diamide + 2 L-glutamate + 2 ADP + 2 phosphate + 2 H(+). It functions in the pathway cofactor biosynthesis; adenosylcobalamin biosynthesis; cob(II)yrinate a,c-diamide from sirohydrochlorin (anaerobic route): step 10/10. Functionally, catalyzes the ATP-dependent amidation of the two carboxylate groups at positions a and c of cobyrinate, using either L-glutamine or ammonia as the nitrogen source. The sequence is that of Cobyrinate a,c-diamide synthase from Magnetococcus marinus (strain ATCC BAA-1437 / JCM 17883 / MC-1).